The sequence spans 163 residues: Leptin (163 aa).

Positions Met1–Ala18 are cleaved as a signal peptide. Cys113 and Cys163 are oxidised to a cystine.

Belongs to the leptin family. Not exclusively localized in adipose tissue but is also expressed in liver.

It localises to the secreted. Functionally, key player in the regulation of energy balance and body weight control. Once released into the circulation, has central and peripheral effects by binding LEPR, found in many tissues, which results in the activation of several major signaling pathways. The chain is Leptin (LEP) from Gallus gallus (Chicken).